The primary structure comprises 284 residues: Bifunctional protein FolD (284 aa).

NADP(+)-binding positions include 165 to 167 (GRS) and Ser190.

This sequence belongs to the tetrahydrofolate dehydrogenase/cyclohydrolase family. In terms of assembly, homodimer.

It carries out the reaction (6R)-5,10-methylene-5,6,7,8-tetrahydrofolate + NADP(+) = (6R)-5,10-methenyltetrahydrofolate + NADPH. It catalyses the reaction (6R)-5,10-methenyltetrahydrofolate + H2O = (6R)-10-formyltetrahydrofolate + H(+). The protein operates within one-carbon metabolism; tetrahydrofolate interconversion. Functionally, catalyzes the oxidation of 5,10-methylenetetrahydrofolate to 5,10-methenyltetrahydrofolate and then the hydrolysis of 5,10-methenyltetrahydrofolate to 10-formyltetrahydrofolate. The protein is Bifunctional protein FolD of Streptococcus sanguinis (strain SK36).